The following is a 463-amino-acid chain: Retinoic acid receptor RXR-gamma (463 aa).

The segment at 1-138 is modulating; sequence MYGNYSHFMK…TSPGSLVKHI (138 aa). Positions 16–53 are disordered; it reads GGSPGHTGSTSMSPSVALPTGKPMDSHPSYTDTPVSAP. 2 NR C4-type zinc fingers span residues 139 to 159 and 175 to 199; these read CAICGDRSSGKHYGVYSCEGC and CRDNKDCLIDKRQRNRCQYCRYQKC. The segment at residues 139 to 204 is a DNA-binding region (nuclear receptor); that stretch reads CAICGDRSSG…RYQKCLVMGM (66 aa). Residues 205–230 form a hinge region; it reads KREAVQEERQRSRERAESEAECASTG. The region spanning 231–459 is the NR LBD domain; the sequence is HEDMPVERIL…TFLMEMLETP (229 aa).

This sequence belongs to the nuclear hormone receptor family. NR2 subfamily. In terms of assembly, homodimer. Heterodimer with a RAR molecule. Binds DNA preferentially as a RAR/RXR heterodimer. Interacts with RARA. In terms of processing, acetylated by EP300. As to expression, expressed in the liver, but not detected in the adrenal gland (at protein level). Restricted expression in adrenal gland, kidney, liver, brain and lungs. Strong expression in heart and muscles.

It localises to the nucleus. The protein resides in the cytoplasm. Functionally, receptor for retinoic acid. Retinoic acid receptors bind as heterodimers to their target response elements in response to their ligands, all-trans or 9-cis retinoic acid, and regulate gene expression in various biological processes. The RAR/RXR heterodimers bind to the retinoic acid response elements (RARE) composed of tandem 5'-AGGTCA-3' sites known as DR1-DR5. The high affinity ligand for RXRs is 9-cis retinoic acid. The polypeptide is Retinoic acid receptor RXR-gamma (Rxrg) (Rattus norvegicus (Rat)).